The chain runs to 353 residues: Virulence plasmid protein pGP2-D (353 aa).

The protein is Virulence plasmid protein pGP2-D of Chlamydia muridarum (strain MoPn / Nigg).